We begin with the raw amino-acid sequence, 139 residues long: Thyrotropin subunit beta (139 aa).

The N-terminal stretch at 1–20 (MELSVAMCGLLCLLFSQAVP) is a signal peptide. Intrachain disulfides connect cysteine 22-cysteine 72, cysteine 36-cysteine 87, cysteine 39-cysteine 127, cysteine 47-cysteine 103, cysteine 51-cysteine 105, and cysteine 108-cysteine 115. An N-linked (GlcNAc...) asparagine glycan is attached at asparagine 43.

It belongs to the glycoprotein hormones subunit beta family. In terms of assembly, heterodimer of a common alpha chain and a unique beta chain which confers biological specificity to thyrotropin, lutropin, follitropin and gonadotropin.

The protein localises to the secreted. Its function is as follows. Indispensable for the control of thyroid structure and metabolism. May play some role in the biological processes of the immature fishes. This is Thyrotropin subunit beta (tshb) from Salmo salar (Atlantic salmon).